The primary structure comprises 101 residues: NADH-quinone oxidoreductase subunit K (101 aa).

A run of 3 helical transmembrane segments spans residues 4–24 (LPHYLVVAAILFTIGVFGIFV), 30–50 (IVILMSIELILLAVNINLVAF), and 61–81 (IFAMFVLTVAAAEAAVGLAIL).

The protein belongs to the complex I subunit 4L family. In terms of assembly, NDH-1 is composed of 14 different subunits. Subunits NuoA, H, J, K, L, M, N constitute the membrane sector of the complex.

Its subcellular location is the cell inner membrane. The enzyme catalyses a quinone + NADH + 5 H(+)(in) = a quinol + NAD(+) + 4 H(+)(out). NDH-1 shuttles electrons from NADH, via FMN and iron-sulfur (Fe-S) centers, to quinones in the respiratory chain. The immediate electron acceptor for the enzyme in this species is believed to be ubiquinone. Couples the redox reaction to proton translocation (for every two electrons transferred, four hydrogen ions are translocated across the cytoplasmic membrane), and thus conserves the redox energy in a proton gradient. In Caulobacter vibrioides (strain ATCC 19089 / CIP 103742 / CB 15) (Caulobacter crescentus), this protein is NADH-quinone oxidoreductase subunit K.